The sequence spans 189 residues: Transcription factor FapR (189 aa).

This sequence belongs to the FapR family.

In terms of biological role, transcriptional factor involved in regulation of membrane lipid biosynthesis by repressing genes involved in fatty acid and phospholipid metabolism. This chain is Transcription factor FapR, found in Exiguobacterium sp. (strain ATCC BAA-1283 / AT1b).